A 360-amino-acid chain; its full sequence is Uroporphyrinogen decarboxylase (360 aa).

Substrate-binding positions include 31 to 35 (RQAGR), Asp81, Tyr157, Thr212, and His333.

Belongs to the uroporphyrinogen decarboxylase family. Homodimer.

The protein resides in the cytoplasm. The catalysed reaction is uroporphyrinogen III + 4 H(+) = coproporphyrinogen III + 4 CO2. It functions in the pathway porphyrin-containing compound metabolism; protoporphyrin-IX biosynthesis; coproporphyrinogen-III from 5-aminolevulinate: step 4/4. Functionally, catalyzes the decarboxylation of four acetate groups of uroporphyrinogen-III to yield coproporphyrinogen-III. This chain is Uroporphyrinogen decarboxylase, found in Janthinobacterium sp. (strain Marseille) (Minibacterium massiliensis).